Here is a 184-residue protein sequence, read N- to C-terminus: V-type proton ATPase subunit E (184 aa).

The protein belongs to the V-ATPase E subunit family.

Its function is as follows. Produces ATP from ADP in the presence of a proton gradient across the membrane. The sequence is that of V-type proton ATPase subunit E from Finegoldia magna (strain ATCC 29328 / DSM 20472 / WAL 2508) (Peptostreptococcus magnus).